Reading from the N-terminus, the 247-residue chain is Uridylate kinase (247 aa).

Lys17–Gly20 is an ATP binding site. Residue Gly59 coordinates UMP. Residues Gly60 and Arg64 each coordinate ATP. Residues Asp79 and Thr140–Thr147 each bind UMP. 3 residues coordinate ATP: Thr167, Tyr173, and Asp176.

This sequence belongs to the UMP kinase family. As to quaternary structure, homohexamer.

The protein localises to the cytoplasm. The catalysed reaction is UMP + ATP = UDP + ADP. Its pathway is pyrimidine metabolism; CTP biosynthesis via de novo pathway; UDP from UMP (UMPK route): step 1/1. With respect to regulation, inhibited by UTP. In terms of biological role, catalyzes the reversible phosphorylation of UMP to UDP. In Legionella pneumophila subsp. pneumophila (strain Philadelphia 1 / ATCC 33152 / DSM 7513), this protein is Uridylate kinase.